A 754-amino-acid polypeptide reads, in one-letter code: 5-methyltetrahydropteroyltriglutamate--homocysteine methyltransferase (754 aa).

5-methyltetrahydropteroyltri-L-glutamate contacts are provided by residues 17 to 20 and K117; that span reads RELK. L-homocysteine contacts are provided by residues 431-433 and E484; that span reads IGS. L-methionine is bound by residues 431-433 and E484; that span reads IGS. Residues 515–516 and W561 contribute to the 5-methyltetrahydropteroyltri-L-glutamate site; that span reads RC. D599 provides a ligand contact to L-homocysteine. D599 contacts L-methionine. E605 lines the 5-methyltetrahydropteroyltri-L-glutamate pocket. Zn(2+)-binding residues include H641, C643, and E665. H694 serves as the catalytic Proton donor. Position 726 (C726) interacts with Zn(2+).

The protein belongs to the vitamin-B12 independent methionine synthase family. Zn(2+) serves as cofactor.

The catalysed reaction is 5-methyltetrahydropteroyltri-L-glutamate + L-homocysteine = tetrahydropteroyltri-L-glutamate + L-methionine. Its pathway is amino-acid biosynthesis; L-methionine biosynthesis via de novo pathway; L-methionine from L-homocysteine (MetE route): step 1/1. Functionally, catalyzes the transfer of a methyl group from 5-methyltetrahydrofolate to homocysteine resulting in methionine formation. The polypeptide is 5-methyltetrahydropteroyltriglutamate--homocysteine methyltransferase (Salmonella paratyphi B (strain ATCC BAA-1250 / SPB7)).